We begin with the raw amino-acid sequence, 144 residues long: Large ribosomal subunit protein uL11 (144 aa).

It belongs to the universal ribosomal protein uL11 family. In terms of assembly, part of the ribosomal stalk of the 50S ribosomal subunit. Interacts with L10 and the large rRNA to form the base of the stalk. L10 forms an elongated spine to which L12 dimers bind in a sequential fashion forming a multimeric L10(L12)X complex. In terms of processing, one or more lysine residues are methylated.

Functionally, forms part of the ribosomal stalk which helps the ribosome interact with GTP-bound translation factors. The chain is Large ribosomal subunit protein uL11 from Granulibacter bethesdensis (strain ATCC BAA-1260 / CGDNIH1).